Here is a 723-residue protein sequence, read N- to C-terminus: Probable C-mannosyltransferase DPY19L4 (723 aa).

Residues 1 to 33 (MAEEEGPPVELRQRKKPKSSENKESAKEEKISD) are disordered. The residue at position 2 (alanine 2) is an N-acetylalanine. Over residues 18-32 (KSSENKESAKEEKIS) the composition is skewed to basic and acidic residues. 12 helical membrane passes run 52-72 (IFIGCLAAVTSGMMYALYLSA), 161-178 (VYFYIGIVFGLQGIYVTA), 184-202 (WLMSGTWLAGMLTVAWFVI), 222-240 (LPYFACQIAALTGYLKSNL), 260-280 (MMMWEYSHYLLFLQAISLFLL), 292-310 (YEVYKIYIFSLFLGYLLQF), 316-337 (LVSPLLSLVAALMLAKCLQLNV), 349-370 (VINFYLVCTLTITLNIIMKMFV), 421-441 (LLPFYILVLIICFLSMLQVIF), 466-486 (IIYHVIHTILLGSLAMVIEGL), 489-509 (IWIPYVCMLAAFGVCSPELWM), and 522-542 (PILLALILSMAVPTIIGLSLW).

The protein belongs to the dpy-19 family. As to expression, widely expressed.

Its subcellular location is the membrane. Its function is as follows. Probable C-mannosyltransferase that mediates C-mannosylation of tryptophan residues on target proteins. This is Probable C-mannosyltransferase DPY19L4 (DPY19L4) from Homo sapiens (Human).